The primary structure comprises 271 residues: Membrane protein insertase YidC 1 (271 aa).

A signal peptide spans M1 to A20. The N-palmitoyl cysteine moiety is linked to residue C21. C21 carries S-diacylglycerol cysteine lipidation. The next 4 helical transmembrane spans lie at I45–I65, Y124–L144, P163–L183, and V201–W221.

Belongs to the OXA1/ALB3/YidC family. Type 2 subfamily.

It is found in the cell membrane. Functionally, required for the insertion and/or proper folding and/or complex formation of integral membrane proteins into the membrane. Involved in integration of membrane proteins that insert both dependently and independently of the Sec translocase complex, as well as at least some lipoproteins. This chain is Membrane protein insertase YidC 1, found in Streptococcus agalactiae serotype V (strain ATCC BAA-611 / 2603 V/R).